The chain runs to 67 residues: ATP synthase F(0) complex subunit 8 (67 aa).

A helical membrane pass occupies residues 8–24 (TWFTTIVAMILSLFILM). The residue at position 54 (Lys54) is an N6-acetyllysine; alternate. Lys54 is modified (N6-succinyllysine; alternate). Lys57 carries the post-translational modification N6-acetyllysine.

It belongs to the ATPase protein 8 family. As to quaternary structure, component of the ATP synthase complex composed at least of ATP5F1A/subunit alpha, ATP5F1B/subunit beta, ATP5MC1/subunit c (homooctomer), MT-ATP6/subunit a, MT-ATP8/subunit 8, ATP5ME/subunit e, ATP5MF/subunit f, ATP5MG/subunit g, ATP5MK/subunit k, ATP5MJ/subunit j, ATP5F1C/subunit gamma, ATP5F1D/subunit delta, ATP5F1E/subunit epsilon, ATP5PF/subunit F6, ATP5PB/subunit b, ATP5PD/subunit d, ATP5PO/subunit OSCP. ATP synthase complex consists of a soluble F(1) head domain (subunits alpha(3) and beta(3)) - the catalytic core - and a membrane F(0) domain - the membrane proton channel (subunits c, a, 8, e, f, g, k and j). These two domains are linked by a central stalk (subunits gamma, delta, and epsilon) rotating inside the F1 region and a stationary peripheral stalk (subunits F6, b, d, and OSCP). Interacts with PRICKLE3.

It localises to the mitochondrion membrane. Functionally, subunit 8, of the mitochondrial membrane ATP synthase complex (F(1)F(0) ATP synthase or Complex V) that produces ATP from ADP in the presence of a proton gradient across the membrane which is generated by electron transport complexes of the respiratory chain. ATP synthase complex consist of a soluble F(1) head domain - the catalytic core - and a membrane F(1) domain - the membrane proton channel. These two domains are linked by a central stalk rotating inside the F(1) region and a stationary peripheral stalk. During catalysis, ATP synthesis in the catalytic domain of F(1) is coupled via a rotary mechanism of the central stalk subunits to proton translocation. In vivo, can only synthesize ATP although its ATP hydrolase activity can be activated artificially in vitro. Part of the complex F(0) domain. In Oryctolagus cuniculus (Rabbit), this protein is ATP synthase F(0) complex subunit 8.